Consider the following 271-residue polypeptide: Large ribosomal subunit protein uL2 (271 aa).

The interval 221–271 (RGVAMNPVDHPMGGGEGKSSGGHPRNRNGIPSNGFKTRNKKKITNKYIIKK) is disordered. The span at 257 to 271 (TRNKKKITNKYIIKK) shows a compositional bias: basic residues.

The protein belongs to the universal ribosomal protein uL2 family. As to quaternary structure, part of the 50S ribosomal subunit. Forms a bridge to the 30S subunit in the 70S ribosome.

In terms of biological role, one of the primary rRNA binding proteins. Required for association of the 30S and 50S subunits to form the 70S ribosome, for tRNA binding and peptide bond formation. It has been suggested to have peptidyltransferase activity; this is somewhat controversial. Makes several contacts with the 16S rRNA in the 70S ribosome. This Karelsulcia muelleri (strain GWSS) (Sulcia muelleri) protein is Large ribosomal subunit protein uL2.